A 249-amino-acid polypeptide reads, in one-letter code: Ubiquinone/menaquinone biosynthesis C-methyltransferase UbiE (249 aa).

S-adenosyl-L-methionine-binding positions include T74, D93, and 121-122; that span reads DA.

Belongs to the class I-like SAM-binding methyltransferase superfamily. MenG/UbiE family.

The catalysed reaction is a 2-demethylmenaquinol + S-adenosyl-L-methionine = a menaquinol + S-adenosyl-L-homocysteine + H(+). It catalyses the reaction a 2-methoxy-6-(all-trans-polyprenyl)benzene-1,4-diol + S-adenosyl-L-methionine = a 5-methoxy-2-methyl-3-(all-trans-polyprenyl)benzene-1,4-diol + S-adenosyl-L-homocysteine + H(+). The protein operates within quinol/quinone metabolism; menaquinone biosynthesis; menaquinol from 1,4-dihydroxy-2-naphthoate: step 2/2. Its pathway is cofactor biosynthesis; ubiquinone biosynthesis. Its function is as follows. Methyltransferase required for the conversion of demethylmenaquinol (DMKH2) to menaquinol (MKH2) and the conversion of 2-polyprenyl-6-methoxy-1,4-benzoquinol (DDMQH2) to 2-polyprenyl-3-methyl-6-methoxy-1,4-benzoquinol (DMQH2). This is Ubiquinone/menaquinone biosynthesis C-methyltransferase UbiE from Acidiphilium cryptum (strain JF-5).